The following is a 497-amino-acid chain: PHD finger protein 10 (497 aa).

Residues 1-13 (MTAAGPGAAPSPG) show a composition bias toward low complexity. The interval 1 to 61 (MTAAGPGAAP…SSRSCETSSQ (61 aa)) is disordered. Phosphoserine occurs at positions 11, 35, and 49. Residues 88–184 (MLQEQVSEYL…HYKEYSQMQQ (97 aa)) form an essential to induce neural progenitor proliferation region. The tract at residues 88–294 (MLQEQVSEYL…PPLDPELPAL (207 aa)) is SAY. A Glycyl lysine isopeptide (Lys-Gly) (interchain with G-Cter in SUMO2) cross-link involves residue Lys240. Ser269 is modified (phosphoserine). Low complexity predominate over residues 284–295 (EPPLDPELPALD). Positions 284-368 (EPPLDPELPA…RSVLSKSAPG (85 aa)) are disordered. The segment at 291–333 (LPALDSDGDSDDGEDGGGDEKRKNKGTSDSSSGNVSEGDSPPD) is essential to induce neural progenitor proliferation. 4 positions are modified to phosphoserine: Ser296, Ser300, Ser326, and Ser330. Over residues 296–307 (SDGDSDDGEDGG) the composition is skewed to acidic residues. Residues 317 to 327 (TSDSSSGNVSE) are compositionally biased toward polar residues. The span at 337 to 358 (DTFHGRQKSKDKMATPRKDGSK) shows a compositional bias: basic and acidic residues. Residues 378–435 (LCGICLKGKESNKKGKAESLIHCSQCDNSGHPSCLDMTMELVSMIKTYPWQCMECKTC) form a PHD-type 1; degenerate zinc finger. Lys384 participates in a covalent cross-link: Glycyl lysine isopeptide (Lys-Gly) (interchain with G-Cter in SUMO2). A PHD-type 2; degenerate zinc finger spans residues 437-480 (ICGQPHHEEEMMFCDVCDRGYHTFCVGLGAIPSGRWICDCCQRA).

It belongs to the SAYP family. Component of neural progenitors-specific chromatin remodeling complex (npBAF complex) composed of at least, ARID1A/BAF250A or ARID1B/BAF250B, SMARCD1/BAF60A, SMARCD3/BAF60C, SMARCA2/BRM/BAF190B, SMARCA4/BRG1/BAF190A, SMARCB1/BAF47, SMARCC1/BAF155, SMARCE1/BAF57, SMARCC2/BAF170, PHF10/BAF45A, ACTL6A/BAF53A and actin. Interacts with ACTL6A/BAF53A, SMARCA2/BRM/BAF190B, SMARCA4/BRG1/BAF190A and PBRM1/BAF180. In terms of tissue distribution, widely expressed. Expressed selectively in neural stem and progenitor cells (at protein level).

The protein localises to the nucleus. Involved in transcription activity regulation by chromatin remodeling. Belongs to the neural progenitors-specific chromatin remodeling complex (npBAF complex) and is required for the proliferation of neural progenitors. During neural development a switch from a stem/progenitor to a post-mitotic chromatin remodeling mechanism occurs as neurons exit the cell cycle and become committed to their adult state. The transition from proliferating neural stem/progenitor cells to post-mitotic neurons requires a switch in subunit composition of the npBAF and nBAF complexes. As neural progenitors exit mitosis and differentiate into neurons, npBAF complexes which contain ACTL6A/BAF53A and PHF10/BAF45A, are exchanged for homologous alternative ACTL6B/BAF53B and DPF1/BAF45B or DPF3/BAF45C subunits in neuron-specific complexes (nBAF). The npBAF complex is essential for the self-renewal/proliferative capacity of the multipotent neural stem cells. The nBAF complex along with CREST plays a role regulating the activity of genes essential for dendrite growth. This Mus musculus (Mouse) protein is PHD finger protein 10 (Phf10).